The chain runs to 576 residues: MSLEPTQTVSGTPPMLHQRTHKQVYPLRMETIPILESDSKATLQSNEPTQKDEEETEYFENKQSVSNLSPDLKFKRHKNKHIQGFPTLGERLDNLQDIKKAKRVENFNSSAPIADDNHSGDATANATANATANATANVNASAMPAPYMPYYYYYHPMNAPTPAMIPYPGSPMHSIMPNSSLQPFYSQPTAAGGPDMTTPQNISSSQQLLPAPQLFPYGSFHQQQLQQPHYIQRTRERKKSIGSQRGRRLSMLASQANGGSTIISPHKDIPEEDFYTVVGNASFGKNLQIRQLFNWCLMRSLHKLELKAKNQEEEGELEHLTKKSKLESTKAETDYVDPKRLAMVIIKEFVDDLKKDHIAIDWEDEEKYEDEDEEKILDNTENYDDTELRQLFQENDDDDDDDDEVDYSEIQRSRRKFSERRKALPKEPKKLLPNSKNVENTKNLSILTSKVNAIKNEVKEWAVTLDTSRPDLEWQELTSFSSQPLEPLSDTEEPDLAIADVETKLETKVDELRYQSHILNSHSLALNEITNSKVNKLNIETMRKISSETDDDHSQVINPQQLLKGLSLSFSKKLDL.

Polar residues predominate over residues 1-11 (MSLEPTQTVSG). Disordered regions lie at residues 1-22 (MSLE…RTHK), 35-64 (LESD…NKQS), 185-205 (YSQP…ISSS), and 227-246 (QPHY…SQRG). Over residues 235 to 246 (RERKKSIGSQRG) the composition is skewed to basic residues. Phosphoserine is present on S250. The interval 412–437 (RSRRKFSERRKALPKEPKKLLPNSKN) is disordered. Over residues 420–430 (RRKALPKEPKK) the composition is skewed to basic and acidic residues.

Component of the MIND kinetochore complex, which is composed of at least MTW1, NNF1, NSL1 and DSN1. Interacts with NSL1.

The protein localises to the nucleus. The protein resides in the chromosome. It is found in the centromere. Its subcellular location is the kinetochore. In terms of biological role, acts as an essential component of the kinetochore MIND complex, which is required for the spindle checkpoint and kinetochore integrity. MIND plays a role in establishing a bipolar spindle-kinetochore interaction by joining kinetochore subunits contacting DNA to those contacting microtubules. The polypeptide is Kinetochore-associated protein DSN1 (DSN1) (Saccharomyces cerevisiae (strain ATCC 204508 / S288c) (Baker's yeast)).